The chain runs to 204 residues: Small ribosomal subunit protein uS4 (204 aa).

The segment at 25–47 (SPVNKREYGPGQHGQRRKKPSDY) is disordered. The S4 RNA-binding domain occupies 93–156 (RRLDAVVYRM…KQFAFVMEAA (64 aa)).

Belongs to the universal ribosomal protein uS4 family. Part of the 30S ribosomal subunit. Contacts protein S5. The interaction surface between S4 and S5 is involved in control of translational fidelity.

Functionally, one of the primary rRNA binding proteins, it binds directly to 16S rRNA where it nucleates assembly of the body of the 30S subunit. With S5 and S12 plays an important role in translational accuracy. This Rhodospirillum centenum (strain ATCC 51521 / SW) protein is Small ribosomal subunit protein uS4.